Consider the following 275-residue polypeptide: MALQQEIIQALGVKPQIDAHEEIRRSVDFLKSYLKTYPFLKTLVLGISGGQDSTLAGKLSQLAISELRDETGDQSYQFIAVRLPFGVQFDEKDCQDALAFIQPDKVLTVNIKEAVLASEKALREAGIELSDFVRGNEKARERMKAQYSIAGMTKGVVVGTDHAAEAVTGFFTKYGDGGTDINPLFRLNKRQGKLLLKTLGCPEHLYLKVPTADLEDDRPSLPDEVALGVTYDNIDDYLEGKQIDEKISQIIDGWYVKTEHKRRPPITIFDDFWKQ.

Residue 46 to 53 participates in ATP binding; sequence GISGGQDS. D52 lines the Mg(2+) pocket. Position 140 (R140) interacts with deamido-NAD(+). T160 serves as a coordination point for ATP. E165 provides a ligand contact to Mg(2+). Deamido-NAD(+)-binding residues include K173 and D180. Residues K189 and T211 each coordinate ATP. 260–261 lines the deamido-NAD(+) pocket; that stretch reads HK.

This sequence belongs to the NAD synthetase family. In terms of assembly, homodimer.

It carries out the reaction deamido-NAD(+) + NH4(+) + ATP = AMP + diphosphate + NAD(+) + H(+). The protein operates within cofactor biosynthesis; NAD(+) biosynthesis; NAD(+) from deamido-NAD(+) (ammonia route): step 1/1. Functionally, catalyzes the ATP-dependent amidation of deamido-NAD to form NAD. Uses ammonia as a nitrogen source. The chain is NH(3)-dependent NAD(+) synthetase from Cronobacter sakazakii (strain ATCC BAA-894) (Enterobacter sakazakii).